A 731-amino-acid chain; its full sequence is Cucumisin (731 aa).

An N-terminal signal peptide occupies residues 1–22 (MSSSLIFKLFFFSLFFSNRLAS). The propeptide at 23–110 (RLDSDDDGKN…VFLNEMNELH (88 aa)) is activation peptide. Residues 34–110 (YIVYMGRKLE…VFLNEMNELH (77 aa)) enclose the Inhibitor I9 domain. The Peptidase S8 domain maps to 114–584 (SWDFLGFPLT…SGHVNPLKAV (471 aa)). Asp-140 (charge relay system) is an active-site residue. Cys-166 and Cys-174 form a disulfide bridge. The active-site Charge relay system is His-204. Intrachain disulfides connect Cys-245-Cys-250 and Cys-380-Cys-397. A glycan (N-linked (GlcNAc...) asparagine) is linked at Asn-466. Ser-525 serves as the catalytic Charge relay system. A propeptide spanning residues 616–731 (GDYSACTSGN…RSPITITSLV (116 aa)) is cleaved from the precursor. Residue Asn-652 is glycosylated (N-linked (GlcNAc...) asparagine).

Belongs to the peptidase S8 family. In terms of assembly, monomer and dimer. The C-terminal propeptide is autocleaved. Specifically expressed in fruits. Expressed in sarcocarp (at protein level).

The protein resides in the secreted. The catalysed reaction is Hydrolysis of proteins with broad specificity.. The protein is Cucumisin of Cucumis melo (Muskmelon).